The sequence spans 235 residues: 2-C-methyl-D-erythritol 4-phosphate cytidylyltransferase (235 aa).

The protein belongs to the IspD/TarI cytidylyltransferase family. IspD subfamily.

It catalyses the reaction 2-C-methyl-D-erythritol 4-phosphate + CTP + H(+) = 4-CDP-2-C-methyl-D-erythritol + diphosphate. It participates in isoprenoid biosynthesis; isopentenyl diphosphate biosynthesis via DXP pathway; isopentenyl diphosphate from 1-deoxy-D-xylulose 5-phosphate: step 2/6. In terms of biological role, catalyzes the formation of 4-diphosphocytidyl-2-C-methyl-D-erythritol from CTP and 2-C-methyl-D-erythritol 4-phosphate (MEP). The chain is 2-C-methyl-D-erythritol 4-phosphate cytidylyltransferase from Pseudomonas putida (strain ATCC 47054 / DSM 6125 / CFBP 8728 / NCIMB 11950 / KT2440).